The primary structure comprises 436 residues: 3-ketoacyl-CoA thiolase (436 aa).

The Acyl-thioester intermediate role is filled by Cys-99. Residues His-392 and Cys-422 each act as proton acceptor in the active site.

This sequence belongs to the thiolase-like superfamily. Thiolase family. As to quaternary structure, heterotetramer of two alpha chains (FadJ) and two beta chains (FadI).

The protein resides in the cytoplasm. The catalysed reaction is an acyl-CoA + acetyl-CoA = a 3-oxoacyl-CoA + CoA. The protein operates within lipid metabolism; fatty acid beta-oxidation. Catalyzes the final step of fatty acid oxidation in which acetyl-CoA is released and the CoA ester of a fatty acid two carbons shorter is formed. The chain is 3-ketoacyl-CoA thiolase from Shewanella baltica (strain OS185).